The following is a 418-amino-acid chain: EPS I polysaccharide export inner membrane protein EpsF (418 aa).

10 helical membrane-spanning segments follow: residues 21 to 41 (VLVV…LPII), 45 to 65 (CAAI…LATA), 142 to 162 (PLLV…IAIY), 170 to 190 (YVVF…GSAI), 222 to 242 (AGTH…VLFL), 262 to 282 (LIVL…EFVM), 296 to 316 (SAWE…AWLL), 326 to 346 (MAFL…PAVG), 347 to 367 (ARLF…FFFA), and 377 to 397 (KTLA…IVSA).

It to S.marcescens SfuB.

The protein localises to the cell inner membrane. Its function is as follows. Probably involved in polymerization and/or export of exopolysaccharide EPS I which functions as a virulence factor. May play a role in export of EPS I or its intermediates across the membranes. The polypeptide is EPS I polysaccharide export inner membrane protein EpsF (epsF) (Ralstonia nicotianae (strain ATCC BAA-1114 / GMI1000) (Ralstonia solanacearum)).